The sequence spans 209 residues: Orotate phosphoribosyltransferase (209 aa).

5-phospho-alpha-D-ribose 1-diphosphate is bound by residues arginine 96, lysine 100, histidine 102, and 122–130 (EDLISTGGS). Serine 126 lines the orotate pocket.

It belongs to the purine/pyrimidine phosphoribosyltransferase family. PyrE subfamily. Homodimer. It depends on Mg(2+) as a cofactor.

The catalysed reaction is orotidine 5'-phosphate + diphosphate = orotate + 5-phospho-alpha-D-ribose 1-diphosphate. It participates in pyrimidine metabolism; UMP biosynthesis via de novo pathway; UMP from orotate: step 1/2. Its function is as follows. Catalyzes the transfer of a ribosyl phosphate group from 5-phosphoribose 1-diphosphate to orotate, leading to the formation of orotidine monophosphate (OMP). The sequence is that of Orotate phosphoribosyltransferase from Streptococcus pyogenes serotype M12 (strain MGAS2096).